The following is a 379-amino-acid chain: MKILRKNHPLLKIMNHSFIDLPTPSNISSWWNFGSLLGTCLVIQILTGLFLAMHYTSDTTTAFSSVAHICRDVNYGWLIRYLHANGASMFFICLFIHVGRGIYYGSYVLSETWNIGIILFLTTMATAFVGYVLPWGQMSFWGATVITNLLSAIPYIGSTLVEWIWGGFSVDKATLTRFFAFHFILPFIIAAFTLVHLLFLHETGSNNPSGLNSNSDKIPFHPYYTTKDLLGIFLLLLALMILTLFFPDILGDPDNYTPANPLNTPAHIKPEWYFLFAYAILRSIPNKLGGVLALILSILILATFPLLNNSKQHGLIFRPITQTIYWIFIANLLVLTWIGGQPVELPFTTIGQIASITYFAIIIILIPISNAIENNIIKL.

Transmembrane regions (helical) follow at residues 33 to 53, 77 to 98, 113 to 133, and 178 to 198; these read FGSL…FLAM, WLIR…FIHV, WNIG…GYVL, and FFAF…VHLL. Residues His83 and His97 each coordinate heme b. Heme b is bound by residues His182 and His196. His201 is an a ubiquinone binding site. 4 helical membrane passes run 226-246, 288-308, 320-340, and 347-367; these read TKDL…TLFF, LGGV…PLLN, ITQT…WIGG, and FTTI…ILIP.

It belongs to the cytochrome b family. In terms of assembly, the cytochrome bc1 complex contains 11 subunits: 3 respiratory subunits (MT-CYB, CYC1 and UQCRFS1), 2 core proteins (UQCRC1 and UQCRC2) and 6 low-molecular weight proteins (UQCRH/QCR6, UQCRB/QCR7, UQCRQ/QCR8, UQCR10/QCR9, UQCR11/QCR10 and a cleavage product of UQCRFS1). This cytochrome bc1 complex then forms a dimer. Heme b serves as cofactor.

The protein resides in the mitochondrion inner membrane. Its function is as follows. Component of the ubiquinol-cytochrome c reductase complex (complex III or cytochrome b-c1 complex) that is part of the mitochondrial respiratory chain. The b-c1 complex mediates electron transfer from ubiquinol to cytochrome c. Contributes to the generation of a proton gradient across the mitochondrial membrane that is then used for ATP synthesis. This Akodon azarae (Azara's grass mouse) protein is Cytochrome b (MT-CYB).